The sequence spans 274 residues: Long chain fatty acid elongase 2 (274 aa).

Helical transmembrane passes span 29–49, 73–93, 115–135, 140–160, 170–190, 201–221, and 238–258; these read MSTFVPLSYKIMIGYLVTIYF, FSLFSGIAAYKLIPELFGVFM, FWGWAFVMSKAPELGDTMFLV, PVIFMHWYHHALTFVYAVVTY, SLALNLAVHTVMYFYFAVRAL, FITTIQIVQFVISCYIFGHLV, and VLSIGGLMYISYLFLFAKFFY.

This sequence belongs to the ELO family. Expressed in various tissues and parts of the body, including the ventral cord, pharyngeal muscles, uterus, and the tail, and most strongly in intestinal cells.

The protein resides in the membrane. The catalysed reaction is hexadecanoyl-CoA + malonyl-CoA + H(+) = 3-oxooctadecanoyl-CoA + CO2 + CoA. The protein operates within lipid metabolism; fatty acid biosynthesis. Functionally, catalyzes the first and rate-limiting reaction of the four reactions that constitute the long-chain fatty acids elongation cycle. Uses malonyl-CoA to add 2 carbons per cycle to the chain of long-chain fatty acids. Condensing enzyme responsible for the elongation of palmitate (hexadecanoate, 16:0), also involved in polyunsaturated fatty acid (PUFA) biosynthesis. The polypeptide is Long chain fatty acid elongase 2 (Caenorhabditis elegans).